Here is a 131-residue protein sequence, read N- to C-terminus: Methylglyoxal synthase (131 aa).

Positions 1–131 constitute an MGS-like domain; sequence MKIALIAHDK…GDLDYRKLRK (131 aa). Residues His8, Lys12, 34-37, and 54-55 each bind substrate; these read TGTT and SG. Asp60 (proton donor/acceptor) is an active-site residue. Substrate is bound at residue His87.

It belongs to the methylglyoxal synthase family.

It catalyses the reaction dihydroxyacetone phosphate = methylglyoxal + phosphate. In terms of biological role, catalyzes the formation of methylglyoxal from dihydroxyacetone phosphate. This is Methylglyoxal synthase from Bacillus anthracis (strain A0248).